Reading from the N-terminus, the 357-residue chain is UDP-N-acetylglucosamine--N-acetylmuramyl-(pentapeptide) pyrophosphoryl-undecaprenol N-acetylglucosamine transferase (357 aa).

UDP-N-acetyl-alpha-D-glucosamine contacts are provided by residues Thr14 to Gly16, Arg168, Ser198, and Gln292.

The protein belongs to the glycosyltransferase 28 family. MurG subfamily.

The protein localises to the cell membrane. It catalyses the reaction di-trans,octa-cis-undecaprenyl diphospho-N-acetyl-alpha-D-muramoyl-L-alanyl-D-glutamyl-meso-2,6-diaminopimeloyl-D-alanyl-D-alanine + UDP-N-acetyl-alpha-D-glucosamine = di-trans,octa-cis-undecaprenyl diphospho-[N-acetyl-alpha-D-glucosaminyl-(1-&gt;4)]-N-acetyl-alpha-D-muramoyl-L-alanyl-D-glutamyl-meso-2,6-diaminopimeloyl-D-alanyl-D-alanine + UDP + H(+). Its pathway is cell wall biogenesis; peptidoglycan biosynthesis. In terms of biological role, cell wall formation. Catalyzes the transfer of a GlcNAc subunit on undecaprenyl-pyrophosphoryl-MurNAc-pentapeptide (lipid intermediate I) to form undecaprenyl-pyrophosphoryl-MurNAc-(pentapeptide)GlcNAc (lipid intermediate II). This chain is UDP-N-acetylglucosamine--N-acetylmuramyl-(pentapeptide) pyrophosphoryl-undecaprenol N-acetylglucosamine transferase, found in Oceanobacillus iheyensis (strain DSM 14371 / CIP 107618 / JCM 11309 / KCTC 3954 / HTE831).